Here is a 901-residue protein sequence, read N- to C-terminus: Vacuolar import and degradation protein 22 (901 aa).

A compositionally biased stretch (polar residues) spans 1-10 (MRAMDTQVQS). The tract at residues 1 to 54 (MRAMDTQVQSAERGLVLPPMNSTVSSATAATTATNTDTDTDGDRDEERESLAED) is disordered. An N-linked (GlcNAc...) asparagine glycan is attached at Asn-21. Low complexity predominate over residues 27–37 (ATAATTATNTD). The BED-type zinc-finger motif lies at 66 to 122 (RDRSRYLGHFLGVDKMLEAVKCKYCGVIIRRQGNSISMAEASQTHLWSTHKIDPNAN). Zn(2+)-binding residues include Cys-87, Cys-90, His-110, and His-115. Residues Asn-242 and Asn-291 are each glycosylated (N-linked (GlcNAc...) asparagine). The chain crosses the membrane as a helical span at residues 381 to 401 (YYHNCIISIINSAILPLFGTP). N-linked (GlcNAc...) asparagine glycosylation is found at Asn-540, Asn-645, Asn-649, Asn-652, Asn-662, Asn-669, Asn-673, Asn-688, and Asn-722. The span at 646–677 (NSHNTSNHSNMNIHTDNQTNNINNRSGNNSDN) shows a compositional bias: low complexity. Positions 646 to 727 (NSHNTSNHSN…NSNNNLSFGS (82 aa)) are disordered. Over residues 679 to 688 (DNEHDNDNDN) the composition is skewed to basic and acidic residues. Positions 718–727 (NSNNNLSFGS) are enriched in low complexity.

Belongs to the VID22 family. Post-translationally, glycosylated.

It localises to the cell membrane. Its subcellular location is the nucleus. In terms of biological role, has a role in the negative regulation of gluconeogenesis. Imports fructose-1,6-bisphosphatase (FBPase) into the intermediate vacuole import and degradation (Vid) vesicles. This is an indirect role and requires cyclophilin A. The chain is Vacuolar import and degradation protein 22 (VID22) from Saccharomyces cerevisiae (strain ATCC 204508 / S288c) (Baker's yeast).